We begin with the raw amino-acid sequence, 77 residues long: UPF0346 protein lin1971 (77 aa).

The protein belongs to the UPF0346 family.

The protein is UPF0346 protein lin1971 of Listeria innocua serovar 6a (strain ATCC BAA-680 / CLIP 11262).